Consider the following 285-residue polypeptide: V-type proton ATPase subunit D (285 aa).

Over residues 208-226 (QKTKENAEKADSVTKEEHQ) the composition is skewed to basic and acidic residues. The segment at 208–285 (QKTKENAEKA…ENDSDEEVIF (78 aa)) is disordered. Phosphoserine is present on Ser-219. Over residues 227–236 (GGSNTLQQTK) the composition is skewed to polar residues. Positions 248 to 263 (VGKEVINEVENSKDDT) are enriched in basic and acidic residues. The span at 271–285 (TDDEEENDSDEEVIF) shows a compositional bias: acidic residues.

It belongs to the V-ATPase D subunit family. As to quaternary structure, V-ATPase is a heteromultimeric enzyme composed of a peripheral catalytic V1 complex (components A to H) attached to an integral membrane V0 proton pore complex (components: a, c, c', c'', d, e, f and VOA1).

The protein resides in the vacuole membrane. Its function is as follows. Subunit of the V1 complex of vacuolar(H+)-ATPase (V-ATPase), a multisubunit enzyme composed of a peripheral complex (V1) that hydrolyzes ATP and a membrane integral complex (V0) that translocates protons. V-ATPase is responsible for acidifying and maintaining the pH of intracellular compartments. This is V-type proton ATPase subunit D (vma8) from Schizosaccharomyces pombe (strain 972 / ATCC 24843) (Fission yeast).